The following is a 397-amino-acid chain: MIRYFTAGESHGPALSAIIDGIPAGVAITKEDIDRELRRRQQGYGRGGRMKIEQDSAEVLSGIRFGKTIGSPIALVIRNRDWENWTDKMAQFSSNEETTEKISIPRPGHADLAGRLKYGFNDIRPVIDRSSARETAARVAAGSLARTFLRQLGIEIGSRVASIGSAEDTGSEGPLRSLLEHGAETLSEAADRSEVRMIGEAAGIEAMASIDRAKEQGDTLGGVIEIFITGVPVGLGSYVQHDRRLDSQLAAAVMAVQAIKGVEIGPAFDNARKPGSEVHDAFTLMKGEGVRRPTNRSGGLEGSMSSGEVIHIRAAMKPISSLQSPLQSFNLDTLEPVLSRFERSDTCAVPAAGVVIEAVVAPVIANALLEKLGGDHMDEIRERLERYREALRSAFTG.

Residues Arg40 and Arg46 each contribute to the NADP(+) site. Residues Arg129 to Ser131, Gln257 to Ala258, Gly302, Lys317 to Ser321, and Arg343 contribute to the FMN site.

The protein belongs to the chorismate synthase family. In terms of assembly, homotetramer. The cofactor is FMNH2.

The catalysed reaction is 5-O-(1-carboxyvinyl)-3-phosphoshikimate = chorismate + phosphate. The protein operates within metabolic intermediate biosynthesis; chorismate biosynthesis; chorismate from D-erythrose 4-phosphate and phosphoenolpyruvate: step 7/7. In terms of biological role, catalyzes the anti-1,4-elimination of the C-3 phosphate and the C-6 proR hydrogen from 5-enolpyruvylshikimate-3-phosphate (EPSP) to yield chorismate, which is the branch point compound that serves as the starting substrate for the three terminal pathways of aromatic amino acid biosynthesis. This reaction introduces a second double bond into the aromatic ring system. This Chlorobium luteolum (strain DSM 273 / BCRC 81028 / 2530) (Pelodictyon luteolum) protein is Chorismate synthase.